A 193-amino-acid chain; its full sequence is Superoxide dismutase [Fe] (193 aa).

Fe cation-binding residues include H27, H74, D157, and H161.

This sequence belongs to the iron/manganese superoxide dismutase family. In terms of assembly, homodimer. Requires Fe cation as cofactor.

The enzyme catalyses 2 superoxide + 2 H(+) = H2O2 + O2. Functionally, destroys superoxide anion radicals which are normally produced within the cells and which are toxic to biological systems. In Salmonella typhimurium (strain LT2 / SGSC1412 / ATCC 700720), this protein is Superoxide dismutase [Fe] (sodB).